A 355-amino-acid chain; its full sequence is Putative inositol monophosphatase 3 (355 aa).

The chain crosses the membrane as a helical span at residues 16–36; that stretch reads LPATIVAILLTFVLVYFLNFH. Glutamate 127, aspartate 167, leucine 169, aspartate 170, and aspartate 292 together coordinate Mg(2+). Glutamate 127 contributes to the substrate binding site. Substrate-binding positions include 169 to 172 and aspartate 292; that span reads LDAT.

It belongs to the inositol monophosphatase superfamily. It depends on Mg(2+) as a cofactor.

It localises to the membrane. The catalysed reaction is a myo-inositol phosphate + H2O = myo-inositol + phosphate. It functions in the pathway polyol metabolism; myo-inositol biosynthesis; myo-inositol from D-glucose 6-phosphate: step 2/2. In Drosophila melanogaster (Fruit fly), this protein is Putative inositol monophosphatase 3.